Here is a 671-residue protein sequence, read N- to C-terminus: Replication protein A 70 kDa DNA-binding subunit (671 aa).

Disordered stretches follow at residues 143-166 and 190-219; these read QVSQ…PAVN and MNKT…LQIS. Positions 199 to 213 are enriched in low complexity; that stretch reads NNNNNNNNNGNNKNN. A DNA-binding region (OB) is located at residues 240 to 322; sequence QTIKVRITKK…NKGDHTVTVN (83 aa). The C4-type zinc finger occupies 530–549; that stretch reads CFSCKKKIARNNEVWTCINC.

The protein belongs to the replication factor A protein 1 family. Component of the replication protein A complex (RPA), a heterotrimeric complex composed of RPA1, RPA2/TEB2 and RPA3/TEB3.

As part of the heterotrimeric replication protein A (RPA) complex, binds and stabilizes single-stranded DNA intermediates, that form during DNA replication or upon DNA stress. It prevents their reannealing and in parallel, recruits and activates different proteins and complexes involved in DNA metabolism. Thereby, it plays an essential role both in DNA replication and the cellular response to DNA damage. In the cellular response to DNA damage, the RPA complex controls DNA repair and DNA damage checkpoint activation. The polypeptide is Replication protein A 70 kDa DNA-binding subunit (Tetrahymena thermophila (strain SB210)).